The following is a 597-amino-acid chain: Arginine--tRNA ligase (597 aa).

The 'HIGH' region motif lies at Ala138 to His148.

This sequence belongs to the class-I aminoacyl-tRNA synthetase family. In terms of assembly, monomer.

The protein localises to the cytoplasm. The catalysed reaction is tRNA(Arg) + L-arginine + ATP = L-arginyl-tRNA(Arg) + AMP + diphosphate. This is Arginine--tRNA ligase from Nitrobacter hamburgensis (strain DSM 10229 / NCIMB 13809 / X14).